Reading from the N-terminus, the 247-residue chain is Fasciclin-like arabinogalactan protein 6 (247 aa).

The N-terminal stretch at 1 to 23 is a signal peptide; the sequence is MSSSLFSYVVLLIFLFTIPYIQS. An FAS1 domain is found at 36-182; sequence PINLTAILEA…LAVYVVDSVL (147 aa). Residues Asn38, Asn57, Asn70, Asn142, and Asn153 are each glycosylated (N-linked (GlcNAc...) asparagine). Residues 192 to 212 are compositionally biased toward low complexity; that stretch reads TTPTGAPAPKSSTSSSDADSP. The tract at residues 192–221 is disordered; that stretch reads TTPTGAPAPKSSTSSSDADSPAADDEHKSA. Residue Gly222 is the site of GPI-anchor amidated glycine attachment. The propeptide at 223–247 is removed in mature form; the sequence is SSVKRTSLGIVVSFALFCCSVIYIA.

Belongs to the fasciclin-like AGP family.

Its subcellular location is the cell membrane. May be a cell surface adhesion protein. The protein is Fasciclin-like arabinogalactan protein 6 (FLA6) of Arabidopsis thaliana (Mouse-ear cress).